A 942-amino-acid chain; its full sequence is VPS35 endosomal protein sorting factor-like (942 aa).

It belongs to the VPS35L family. Component of the heterotrimeric retriever complex.

Its subcellular location is the endosome. Its function is as follows. Acts as a component of the retriever complex. The retriever complex is a heterotrimeric complex related to retromer cargo-selective complex (CSC) and essential for retromer-independent retrieval and recycling of numerous cargos. The protein is VPS35 endosomal protein sorting factor-like of Drosophila melanogaster (Fruit fly).